The following is a 236-amino-acid chain: UPF0502 protein Bcen2424_5610 (236 aa).

It belongs to the UPF0502 family.

In Burkholderia cenocepacia (strain HI2424), this protein is UPF0502 protein Bcen2424_5610.